Consider the following 335-residue polypeptide: Aspartate--ammonia ligase (335 aa).

Belongs to the class-II aminoacyl-tRNA synthetase family. AsnA subfamily.

It localises to the cytoplasm. It catalyses the reaction L-aspartate + NH4(+) + ATP = L-asparagine + AMP + diphosphate + H(+). It participates in amino-acid biosynthesis; L-asparagine biosynthesis; L-asparagine from L-aspartate (ammonia route): step 1/1. In Levilactobacillus brevis (strain ATCC 367 / BCRC 12310 / CIP 105137 / JCM 1170 / LMG 11437 / NCIMB 947 / NCTC 947) (Lactobacillus brevis), this protein is Aspartate--ammonia ligase.